Consider the following 198-residue polypeptide: Succinate dehydrogenase [ubiquinone] cytochrome b subunit, mitochondrial (198 aa).

The transit peptide at methionine 1 to lysine 50 directs the protein to the mitochondrion. At asparagine 51 to serine 99 the chain is on the mitochondrial matrix side. A ubiquinone is bound by residues serine 93 and arginine 97. A helical transmembrane segment spans residues leucine 100 to leucine 120. The Mitochondrial intermembrane portion of the chain corresponds to glycine 121–lysine 139. The helical transmembrane segment at isoleucine 140–alanine 160 threads the bilayer. Histidine 156 serves as a coordination point for heme. At isoleucine 161–lysine 175 the chain is on the mitochondrial matrix side. A helical transmembrane segment spans residues glycine 176 to leucine 196. The Mitochondrial intermembrane segment spans residues threonine 197 to leucine 198.

Belongs to the cytochrome b560 family. In terms of assembly, forms part of complex II containing four subunits: a flavoprotein (FP), an iron-sulfur protein (IP) and a cytochrome b composed of two integral membrane proteins. Heme serves as cofactor.

It is found in the mitochondrion inner membrane. The protein operates within carbohydrate metabolism; tricarboxylic acid cycle. Functionally, membrane-anchoring mono-heme cytochrome b subunit of succinate dehydrogenase (SDH) that is involved in system II of the mitochondrial electron transport chain and is responsible for transferring electrons from succinate to ubiquinone (coenzyme Q). SDH3 and SDH4 form the membrane dimer that anchors the catalytic dimer formed by SDH1 and SDH2 to the matrix surface of the mitochondrial inner membrane. Electrons originating from the catalytic dimer enter the membrane dimer for ubiquinone reduction. This Saccharomyces cerevisiae (strain ATCC 204508 / S288c) (Baker's yeast) protein is Succinate dehydrogenase [ubiquinone] cytochrome b subunit, mitochondrial (SDH3).